We begin with the raw amino-acid sequence, 102 residues long: Large ribosomal subunit protein bL21 (102 aa).

This sequence belongs to the bacterial ribosomal protein bL21 family. In terms of assembly, part of the 50S ribosomal subunit. Contacts protein L20.

Its function is as follows. This protein binds to 23S rRNA in the presence of protein L20. The polypeptide is Large ribosomal subunit protein bL21 (Oleidesulfovibrio alaskensis (strain ATCC BAA-1058 / DSM 17464 / G20) (Desulfovibrio alaskensis)).